A 432-amino-acid chain; its full sequence is D-amino acid dehydrogenase (432 aa).

Residue 3–17 (VVILGSGVVGVASAW) coordinates FAD.

Belongs to the DadA oxidoreductase family. Requires FAD as cofactor.

The catalysed reaction is a D-alpha-amino acid + A + H2O = a 2-oxocarboxylate + AH2 + NH4(+). It participates in amino-acid degradation; D-alanine degradation; NH(3) and pyruvate from D-alanine: step 1/1. In terms of biological role, oxidative deamination of D-amino acids. This is D-amino acid dehydrogenase from Escherichia coli O127:H6 (strain E2348/69 / EPEC).